Consider the following 421-residue polypeptide: UDP-N-acetylglucosamine 1-carboxyvinyltransferase (421 aa).

Residue 22–23 (KN) coordinates phosphoenolpyruvate. Arg-92 is a UDP-N-acetyl-alpha-D-glucosamine binding site. Cys-116 functions as the Proton donor in the catalytic mechanism. Position 116 is a 2-(S-cysteinyl)pyruvic acid O-phosphothioketal (Cys-116). UDP-N-acetyl-alpha-D-glucosamine-binding residues include Asp-306 and Val-328.

The protein belongs to the EPSP synthase family. MurA subfamily.

The protein localises to the cytoplasm. It carries out the reaction phosphoenolpyruvate + UDP-N-acetyl-alpha-D-glucosamine = UDP-N-acetyl-3-O-(1-carboxyvinyl)-alpha-D-glucosamine + phosphate. Its pathway is cell wall biogenesis; peptidoglycan biosynthesis. Cell wall formation. Adds enolpyruvyl to UDP-N-acetylglucosamine. The sequence is that of UDP-N-acetylglucosamine 1-carboxyvinyltransferase from Thermotoga petrophila (strain ATCC BAA-488 / DSM 13995 / JCM 10881 / RKU-1).